A 238-amino-acid chain; its full sequence is Zinc import ATP-binding protein ZnuC (238 aa).

The ABC transporter domain occupies 5 to 220 (IQLNNISVNF…SEFIAIFGNI (216 aa)). 37–44 (GPNGAGKS) contacts ATP.

Belongs to the ABC transporter superfamily. Zinc importer (TC 3.A.1.15.5) family. As to quaternary structure, the complex is composed of two ATP-binding proteins (ZnuC), two transmembrane proteins (ZnuB) and a solute-binding protein (ZnuA).

Its subcellular location is the cell membrane. It carries out the reaction Zn(2+)(out) + ATP(in) + H2O(in) = Zn(2+)(in) + ADP(in) + phosphate(in) + H(+)(in). Its function is as follows. Part of the ABC transporter complex ZnuABC involved in zinc import. Responsible for energy coupling to the transport system. The protein is Zinc import ATP-binding protein ZnuC of Buchnera aphidicola subsp. Baizongia pistaciae (strain Bp).